The sequence spans 150 residues: Macrodomain Ter protein (150 aa).

The protein belongs to the MatP family. Homodimer.

Its subcellular location is the cytoplasm. Required for spatial organization of the terminus region of the chromosome (Ter macrodomain) during the cell cycle. Prevents early segregation of duplicated Ter macrodomains during cell division. Binds specifically to matS, which is a 13 bp signature motif repeated within the Ter macrodomain. The protein is Macrodomain Ter protein of Salmonella arizonae (strain ATCC BAA-731 / CDC346-86 / RSK2980).